The sequence spans 66 residues: DNA-directed RNA polymerase subunit omega (66 aa).

Belongs to the RNA polymerase subunit omega family. The RNAP catalytic core consists of 2 alpha, 1 beta, 1 beta' and 1 omega subunit. When a sigma factor is associated with the core the holoenzyme is formed, which can initiate transcription.

It catalyses the reaction RNA(n) + a ribonucleoside 5'-triphosphate = RNA(n+1) + diphosphate. Promotes RNA polymerase assembly. Latches the N- and C-terminal regions of the beta' subunit thereby facilitating its interaction with the beta and alpha subunits. The protein is DNA-directed RNA polymerase subunit omega of Clostridium botulinum (strain Eklund 17B / Type B).